A 422-amino-acid polypeptide reads, in one-letter code: Protein king tubby 2 (422 aa).

The tract at residues 49 to 169 (PSNPDQIISS…ASGHNDAEGD (121 aa)) is disordered. Residues 57 to 81 (SSGSPTTVTATGTTTGSVTTTPTSP) are compositionally biased toward low complexity.

Belongs to the TUB family.

The protein resides in the cytoplasm. Its subcellular location is the nucleus. In Culex quinquefasciatus (Southern house mosquito), this protein is Protein king tubby 2 (king-tubby2).